The following is a 173-amino-acid chain: uncharacterized protein (173 aa).

The next 3 membrane-spanning stretches (helical) occupy residues 24–44, 82–102, and 135–155; these read VAFI…WLFF, YILF…SYFI, and LIKR…ILFS.

It localises to the cell membrane. This is an uncharacterized protein from Rickettsia prowazekii (strain Madrid E).